The following is a 155-amino-acid chain: MYKMQLLSCIALTLVLVANSAPTTSSSTKETQQQLEQLLLDLRLLLNGVNNYENPQLSRMLTFKFYTPKKATELTHLQCLPEELKLLEEVLYLAPNKNFHLTDIKELMSNINVTLLKLKGSETRFKCEYDDETATITEFLNKWITFCQSIFSTLT.

The signal sequence occupies residues 1–20; the sequence is MYKMQLLSCIALTLVLVANS. Thr-23 carries an O-linked (GalNAc...) threonine glycan. Residues Cys-79 and Cys-127 are joined by a disulfide bond.

This sequence belongs to the IL-2 family.

The protein localises to the secreted. Functionally, cytokine produced by activated CD4-positive helper T-cells and to a lesser extend activated CD8-positive T-cells and natural killer (NK) cells that plays pivotal roles in the immune response and tolerance. Binds to a receptor complex composed of either the high-affinity trimeric IL-2R (IL2RA/CD25, IL2RB/CD122 and IL2RG/CD132) or the low-affinity dimeric IL-2R (IL2RB and IL2RG). Interaction with the receptor leads to oligomerization and conformation changes in the IL-2R subunits resulting in downstream signaling starting with phosphorylation of JAK1 and JAK3. In turn, JAK1 and JAK3 phosphorylate the receptor to form a docking site leading to the phosphorylation of several substrates including STAT5. This process leads to activation of several pathways including STAT, phosphoinositide-3-kinase/PI3K and mitogen-activated protein kinase/MAPK pathways. Functions as a T-cell growth factor and can increase NK-cell cytolytic activity as well. Promotes strong proliferation of activated B-cells and subsequently immunoglobulin production. Plays a pivotal role in regulating the adaptive immune system by controlling the survival and proliferation of regulatory T-cells, which are required for the maintenance of immune tolerance. Moreover, participates in the differentiation and homeostasis of effector T-cell subsets, including Th1, Th2, Th17 as well as memory CD8-positive T-cells. The chain is Interleukin-2 (IL2) from Halichoerus grypus (Gray seal).